A 1410-amino-acid polypeptide reads, in one-letter code: MECIGKRVKSRSWQRLQAVNKRKKMETVAPVTSPPKKRRQKKPKNYDSDIEDITPTCNDSVPPPQVSNMYSVPNNSVKESFSRIMRDLNVEKKSGPSSSRLTDGSEQNPCLKERSFRVSDLGVEKKCSPEITDLDVGIPVPRFSKLKDVSEQKNTCLMQKSSPEIADLDLVISVPSSSVLKDVSEEIRFLKDKCSPEIRGLVLEKSVPGEIEILSDSESETEARRRASAKKKLFEESSRIVESISDGEDSSSETDEEEEENQDSEDNNTKDNVTVESLSSEDPSSSSSSSSSSSSSSSSSSSDDESYVKEVVGDNRDDDDLRKASSPIKRVSLVERKALVRYKRSGSSLTKPRERDNKIQKLNHREEEKKERQREVVRVVTKQPSNVVYTCAHCGKENTGNPESHSSFIRPHSIRDEIEDVNNFASTNVSKYEDSVSINSGKTTGAPSRPEVENPETGKELNTPEKPSISRPEIFTTEKAIDVQVPEEPSRPEIYSSEKAKEVQAPEMPSRPEVFSSEKAKEIQVPEMPSIPEIQNSEKAKEVQANNRMGLTTPAVAEGLNKSVVTNEHIEDDSDSSISSGDGYESDPTLKDKEVKINNHSDWRILNGNNKEVDLFRLLVNSVWEKGQLGEEDEADELVSSAEDQSQEQAREDHRKYDDAGLLIIRPPPLIEKFGVEEPQSPPVVSEIDSEEDRLWEELAFFTKSNDIGGNELFSNVEKNISANETPAAQCKKGKHDLCIDLEVGLKCMHCGFVEREIRSMDVSEWGEKTTRERRKFDRFEEEEGSSFIGKLGFDAPNNSLNEGCVSSEGTVWDKIPGVKSQMYPHQQEGFEFIWKNLAGTIMLNELKDFENSDETGGCIMSHAPGTGKTRLTIIFLQAYLQCFPDCKPVIIAPASLLLTWAEEFKKWNISIPFHNLSSLDFTGKENSAALGLLMQKNATARSNNEIRMVKIYSWIKSKSILGISYNLYEKLAGVKDEDKKTKMVREVKPDKELDDIREILMGRPGLLVLDEAHTPRNQRSCIWKTLSKVETQKRILLSGTPFQNNFLELCNVLGLARPKYLERLTSTLKKSGMTVTKRGKKNLGNEINNRGIEELKAVMLPFVHVHKGSILQSSLPGLRECVVVLNPPELQRRVLESIEVTHNRKTKNVFETEHKLSLVSVHPSLVSRCKISEKERLSIDEALLAQLKKVRLDPNQSVKTRFLMEFVELCEVIKEKVLVFSQYIDPLKLIMKHLVSRFKWNPGEEVLYMHGKLEQKQRQTLINEFNDPKSKAKVFLASTKACSEGISLVGASRVILLDVVWNPAVERQAISRAYRIGQKRIVYTYHLVAKGTPEGPKYCKQAQKDRISELVFACSSRHDKGKEKIAEAVTEDKVLDTMVEHSKLGDMFDNLIVQPKEADLVEGFSILMP.

Residues 1-12 (MECIGKRVKSRS) show a composition bias toward basic residues. Disordered regions lie at residues 1 to 74 (MECI…SVPN), 87 to 108 (DLNV…SEQN), 209 to 330 (GEIE…PIKR), 344 to 376 (RSGS…QREV), 428 to 593 (NVSK…LKDK), and 632 to 654 (EDEA…REDH). A Nuclear localization signal 1 motif is present at residues 22-29 (RKKMETVA). The segment covering 95–108 (GPSSSRLTDGSEQN) has biased composition (polar residues). The span at 245–266 (SDGEDSSSETDEEEEENQDSED) shows a compositional bias: acidic residues. A coiled-coil region spans residues 248–278 (EDSSSETDEEEEENQDSEDNNTKDNVTVESL). A compositionally biased stretch (low complexity) spans 276–301 (ESLSSEDPSSSSSSSSSSSSSSSSSS). The span at 306–323 (SYVKEVVGDNRDDDDLRK) shows a compositional bias: basic and acidic residues. Residues 328-335 (IKRVSLVE) carry the Nuclear localization signal 2 motif. The span at 351–376 (KPRERDNKIQKLNHREEEKKERQREV) shows a compositional bias: basic and acidic residues. The stretch at 356–377 (DNKIQKLNHREEEKKERQREVV) forms a coiled coil. The span at 428-446 (NVSKYEDSVSINSGKTTGA) shows a compositional bias: polar residues. Composition is skewed to basic and acidic residues over residues 450–463 (PEVE…ELNT) and 488–504 (EPSR…KEVQ). Residues 576 to 587 (SSISSGDGYESD) are compositionally biased toward low complexity. One can recognise a Helicase ATP-binding domain in the interval 850 to 1060 (FENSDETGGC…CNVLGLARPK (211 aa)). An ATP-binding site is contributed by 863-870 (HAPGTGKT). A DEAH box motif is present at residues 1011–1014 (DEAH). The Nuclear localization signal 3 signature appears at 1132 to 1139 (QRRVLESI). Residues 1206–1359 (EFVELCEVIK…ELVFACSSRH (154 aa)) enclose the Helicase C-terminal domain.

It belongs to the SNF2/RAD54 helicase family. As to quaternary structure, interacts with NRPD1.

Its subcellular location is the nucleus. In terms of biological role, probable chromatin remodeling factor. The chain is SNF2 domain-containing protein CLASSY 3 (CLSY3) from Arabidopsis thaliana (Mouse-ear cress).